The following is a 292-amino-acid chain: Acidic endochitinase (292 aa).

The N-terminal stretch at Met-1–Ala-25 is a signal peptide. A GH18 domain is found at Ala-26 to Gly-292. 2 disulfides stabilise this stretch: Cys-45–Cys-92 and Cys-75–Cys-82. Glu-152 (proton donor) is an active-site residue. Cys-180 and Cys-209 form a disulfide bridge.

It belongs to the glycosyl hydrolase 18 family. Chitinase class II subfamily.

It is found in the secreted. The protein resides in the extracellular space. It catalyses the reaction Random endo-hydrolysis of N-acetyl-beta-D-glucosaminide (1-&gt;4)-beta-linkages in chitin and chitodextrins.. Functionally, this protein functions as a defense against chitin containing fungal pathogens. This Cucumis sativus (Cucumber) protein is Acidic endochitinase.